The sequence spans 120 residues: Cell cycle protein GpsB (120 aa).

The stretch at 34–74 (LDDVIKDYDTYNKELERLNDENERLRAKVDELNRQVEVGSS) forms a coiled coil. The tract at residues 69–90 (VEVGSSMSNQTASRQPVSSATN) is disordered. Positions 71 to 90 (VGSSMSNQTASRQPVSSATN) are enriched in polar residues.

The protein belongs to the GpsB family. Forms polymers through the coiled coil domains. Interacts with PBP1, MreC and EzrA.

It is found in the cytoplasm. Its function is as follows. Divisome component that associates with the complex late in its assembly, after the Z-ring is formed, and is dependent on DivIC and PBP2B for its recruitment to the divisome. Together with EzrA, is a key component of the system that regulates PBP1 localization during cell cycle progression. Its main role could be the removal of PBP1 from the cell pole after pole maturation is completed. Also contributes to the recruitment of PBP1 to the division complex. Not essential for septum formation. In Limosilactobacillus reuteri (strain DSM 20016) (Lactobacillus reuteri), this protein is Cell cycle protein GpsB.